A 96-amino-acid polypeptide reads, in one-letter code: (4S)-4-hydroxy-5-phosphonooxypentane-2,3-dione isomerase (96 aa).

The 90-residue stretch at 2-91 (HVTLVEINVH…MTGPRKKRLF (90 aa)) folds into the ABM domain.

Belongs to the LsrG family. Homodimer.

The protein localises to the cytoplasm. The enzyme catalyses (2S)-2-hydroxy-3,4-dioxopentyl phosphate = 3-hydroxy-2,4-dioxopentyl phosphate. Its function is as follows. Involved in the degradation of phospho-AI-2, thereby terminating induction of the lsr operon and closing the AI-2 signaling cycle. Catalyzes the conversion of (4S)-4-hydroxy-5-phosphonooxypentane-2,3-dione (P-DPD) to 3-hydroxy-5-phosphonooxypentane-2,4-dione (P-HPD). This is (4S)-4-hydroxy-5-phosphonooxypentane-2,3-dione isomerase from Escherichia coli O9:H4 (strain HS).